The following is a 153-amino-acid chain: Histone H2B.3 (153 aa).

Basic and acidic residues-rich tracts occupy residues 1–28 (MAPK…EKAP) and 36–53 (EKRL…EGRK). The tract at residues 1 to 61 (MAPKAEKKPA…RKAGRKKAKK (61 aa)) is disordered. Residues lysine 7 and lysine 37 each carry the N6-acetyllysine modification. Lysine 149 is covalently cross-linked (Glycyl lysine isopeptide (Lys-Gly) (interchain with G-Cter in ubiquitin)).

This sequence belongs to the histone H2B family. As to quaternary structure, the nucleosome is a histone octamer containing two molecules each of H2A, H2B, H3 and H4 assembled in one H3-H4 heterotetramer and two H2A-H2B heterodimers. The octamer wraps approximately 147 bp of DNA. Can be acetylated to form H2BK6ac and H2BK33ac. Post-translationally, monoubiquitinated by BRE1 to form H2BK143ub1 and deubiquitinated by UBP26. Required for heterochromatic histone H3 di- and trimethylation at H3K4me. May give a specific tag for epigenetic transcriptional activation.

It is found in the nucleus. It localises to the chromosome. In terms of biological role, core component of nucleosome. Nucleosomes wrap and compact DNA into chromatin, limiting DNA accessibility to the cellular machineries which require DNA as a template. Histones thereby play a central role in transcription regulation, DNA repair, DNA replication and chromosomal stability. DNA accessibility is regulated via a complex set of post-translational modifications of histones, also called histone code, and nucleosome remodeling. The polypeptide is Histone H2B.3 (H2B.3) (Oryza sativa subsp. japonica (Rice)).